We begin with the raw amino-acid sequence, 445 residues long: tRNA-2-methylthio-N(6)-dimethylallyladenosine synthase (445 aa).

An MTTase N-terminal domain is found at 13-129; it reads KKLFIKTYGC…LPAMARAGRG (117 aa). 6 residues coordinate [4Fe-4S] cluster: C22, C58, C92, C163, C167, and C170. The Radical SAM core domain occupies 149–383; the sequence is TRRAPAAFLT…LTSQQKAAQE (235 aa). One can recognise a TRAM domain in the interval 383 to 445; sequence EGMVGRELGV…PNSLAGVLAA (63 aa).

Belongs to the methylthiotransferase family. MiaB subfamily. In terms of assembly, monomer. [4Fe-4S] cluster is required as a cofactor.

It is found in the cytoplasm. It carries out the reaction N(6)-dimethylallyladenosine(37) in tRNA + (sulfur carrier)-SH + AH2 + 2 S-adenosyl-L-methionine = 2-methylsulfanyl-N(6)-dimethylallyladenosine(37) in tRNA + (sulfur carrier)-H + 5'-deoxyadenosine + L-methionine + A + S-adenosyl-L-homocysteine + 2 H(+). Functionally, catalyzes the methylthiolation of N6-(dimethylallyl)adenosine (i(6)A), leading to the formation of 2-methylthio-N6-(dimethylallyl)adenosine (ms(2)i(6)A) at position 37 in tRNAs that read codons beginning with uridine. The protein is tRNA-2-methylthio-N(6)-dimethylallyladenosine synthase of Paracoccus denitrificans (strain Pd 1222).